Consider the following 535-residue polypeptide: CTP synthase (535 aa).

The amidoligase domain stretch occupies residues 1 to 267 (MTKFIFVTGG…DDIVIKKLGL (267 aa)). Ser13 contacts CTP. Ser13 contributes to the UTP binding site. 14–19 (SLGKGI) contacts ATP. An L-glutamine-binding site is contributed by Tyr54. Asp71 provides a ligand contact to ATP. Asp71 and Glu141 together coordinate Mg(2+). CTP-binding positions include 148–150 (DIE), 188–193 (KTKPTQ), and Lys224. UTP-binding positions include 188-193 (KTKPTQ) and Lys224. One can recognise a Glutamine amidotransferase type-1 domain in the interval 292-534 (TIGIVGKYVS…IGASLKTNKL (243 aa)). Gly354 lines the L-glutamine pocket. Cys381 (nucleophile; for glutamine hydrolysis) is an active-site residue. L-glutamine-binding positions include 382–385 (LGMQ), Glu405, and Arg462. Catalysis depends on residues His507 and Glu509.

It belongs to the CTP synthase family. Homotetramer.

The catalysed reaction is UTP + L-glutamine + ATP + H2O = CTP + L-glutamate + ADP + phosphate + 2 H(+). The enzyme catalyses L-glutamine + H2O = L-glutamate + NH4(+). It catalyses the reaction UTP + NH4(+) + ATP = CTP + ADP + phosphate + 2 H(+). It participates in pyrimidine metabolism; CTP biosynthesis via de novo pathway; CTP from UDP: step 2/2. With respect to regulation, allosterically activated by GTP, when glutamine is the substrate; GTP has no effect on the reaction when ammonia is the substrate. The allosteric effector GTP functions by stabilizing the protein conformation that binds the tetrahedral intermediate(s) formed during glutamine hydrolysis. Inhibited by the product CTP, via allosteric rather than competitive inhibition. Functionally, catalyzes the ATP-dependent amination of UTP to CTP with either L-glutamine or ammonia as the source of nitrogen. Regulates intracellular CTP levels through interactions with the four ribonucleotide triphosphates. The protein is CTP synthase of Carboxydothermus hydrogenoformans (strain ATCC BAA-161 / DSM 6008 / Z-2901).